The primary structure comprises 98 residues: Aspartyl/glutamyl-tRNA(Asn/Gln) amidotransferase subunit C (98 aa).

Residues 75-98 (AQALSGAPAQEQQRFKVPQILGED) are disordered.

Belongs to the GatC family. As to quaternary structure, heterotrimer of A, B and C subunits.

It catalyses the reaction L-glutamyl-tRNA(Gln) + L-glutamine + ATP + H2O = L-glutaminyl-tRNA(Gln) + L-glutamate + ADP + phosphate + H(+). The enzyme catalyses L-aspartyl-tRNA(Asn) + L-glutamine + ATP + H2O = L-asparaginyl-tRNA(Asn) + L-glutamate + ADP + phosphate + 2 H(+). Allows the formation of correctly charged Asn-tRNA(Asn) or Gln-tRNA(Gln) through the transamidation of misacylated Asp-tRNA(Asn) or Glu-tRNA(Gln) in organisms which lack either or both of asparaginyl-tRNA or glutaminyl-tRNA synthetases. The reaction takes place in the presence of glutamine and ATP through an activated phospho-Asp-tRNA(Asn) or phospho-Glu-tRNA(Gln). In Streptomyces griseus subsp. griseus (strain JCM 4626 / CBS 651.72 / NBRC 13350 / KCC S-0626 / ISP 5235), this protein is Aspartyl/glutamyl-tRNA(Asn/Gln) amidotransferase subunit C.